A 353-amino-acid chain; its full sequence is Phospho-N-acetylmuramoyl-pentapeptide-transferase (353 aa).

The next 10 membrane-spanning stretches (helical) occupy residues 24–44 (LGFFIAFFLTLFLMPKFILWA), 66–86 (TPTMGGIVFVFATIVASVLCA), 88–108 (LGNLYVLLGIIVLVGFSFVGF), 129–149 (FGMLFVLSLVVSVLLSLKGLD), 160–180 (PLFEMPTMLAVGFWVLVFLST), 192–212 (GLASVPSIFTLLSLSIFVYVA), 229–249 (VGELFVVSLALVGSLFGFLWY), 256–276 (VFMGDSGSLALGGFIAYNAIV), 281–301 (ILLVLMGSIFVVETLSVILQV), and 330–350 (KVIVRFWIISMLSNLVALLSL).

The protein belongs to the glycosyltransferase 4 family. MraY subfamily. Mg(2+) serves as cofactor.

The protein resides in the cell inner membrane. The enzyme catalyses UDP-N-acetyl-alpha-D-muramoyl-L-alanyl-gamma-D-glutamyl-meso-2,6-diaminopimeloyl-D-alanyl-D-alanine + di-trans,octa-cis-undecaprenyl phosphate = di-trans,octa-cis-undecaprenyl diphospho-N-acetyl-alpha-D-muramoyl-L-alanyl-D-glutamyl-meso-2,6-diaminopimeloyl-D-alanyl-D-alanine + UMP. It participates in cell wall biogenesis; peptidoglycan biosynthesis. In terms of biological role, catalyzes the initial step of the lipid cycle reactions in the biosynthesis of the cell wall peptidoglycan: transfers peptidoglycan precursor phospho-MurNAc-pentapeptide from UDP-MurNAc-pentapeptide onto the lipid carrier undecaprenyl phosphate, yielding undecaprenyl-pyrophosphoryl-MurNAc-pentapeptide, known as lipid I. The chain is Phospho-N-acetylmuramoyl-pentapeptide-transferase from Helicobacter pylori (strain HPAG1).